Here is a 356-residue protein sequence, read N- to C-terminus: Formate-nitrite transporter (356 aa).

At 1-108 the chain is on the cytoplasmic side; the sequence is MPREKPRADE…TKATYPIMKM (108 aa). The helical transmembrane segment at 109 to 129 threads the bilayer; the sequence is FSLSVLAGMLLSVGGLLSITI. Over 130-142 the chain is Extracellular; the sequence is GKGIPSSDIGIQK. Residues 143-163 form a helical membrane-spanning segment; that stretch reads IVFGFFNSVGLNLVVLCGGEL. Residues 164 to 182 lie on the Cytoplasmic side of the membrane; it reads FTSNCAFLIPGFMEGAYSR. Residues 183–203 traverse the membrane as a helical segment; that stretch reads WLFFKTHFVVYFGNLVGSIFV. Over 204 to 237 the chain is Extracellular; that stretch reads STYFGKLLGSFESPMYLSAVKQIGETKVAMNWGR. The chain crosses the membrane as a helical span at residues 238 to 258; sequence ALLSGIGCNWLVCCAVYFSAS. At 259–265 the chain is on the cytoplasmic side; that stretch reads AKDLLSK. Residues 266-286 traverse the membrane as a helical segment; sequence LVVISFLVLTFASLEFENCVG. At 287–310 the chain is on the extracellular side; sequence NMFLLSLSHMYGGNFTLGQWILNN. The helical transmembrane segment at 311–331 threads the bilayer; the sequence is LIPVSIGNFIGGTFLLGIPLW. The Cytoplasmic segment spans residues 332 to 356; it reads YVHVSNVYNIPFLDPLYQQSQAKTQ.

This sequence belongs to the FNT transporter (TC 1.A.16) family. Homopentamer.

It is found in the membrane. The enzyme catalyses (S)-lactate(in) + H(+)(in) = (S)-lactate(out) + H(+)(out). It catalyses the reaction formate(in) + H(+)(in) = formate(out) + H(+)(out). It carries out the reaction pyruvate(out) + H(+)(out) = pyruvate(in) + H(+)(in). The catalysed reaction is acetate(out) + H(+)(out) = acetate(in) + H(+)(in). Its function is as follows. Monocarboxylate-proton symporter; active in acidic-to-neutral pH range. Transports formate, acetate and L-lactate. This is Formate-nitrite transporter from Entamoeba histolytica (strain ATCC 30459 / HM-1:IMSS / ABRM).